A 66-amino-acid chain; its full sequence is Large ribosomal subunit protein bL35c (66 aa).

The protein belongs to the bacterial ribosomal protein bL35 family.

The protein resides in the plastid. The protein localises to the chloroplast. This chain is Large ribosomal subunit protein bL35c, found in Guillardia theta (Cryptophyte).